The following is a 231-amino-acid chain: Biosynthetic peptidoglycan transglycosylase (231 aa).

A helical membrane pass occupies residues 12–32; that stretch reads LLAAFALLLLWQVWLFAQVAW.

It belongs to the glycosyltransferase 51 family.

Its subcellular location is the cell inner membrane. It carries out the reaction [GlcNAc-(1-&gt;4)-Mur2Ac(oyl-L-Ala-gamma-D-Glu-L-Lys-D-Ala-D-Ala)](n)-di-trans,octa-cis-undecaprenyl diphosphate + beta-D-GlcNAc-(1-&gt;4)-Mur2Ac(oyl-L-Ala-gamma-D-Glu-L-Lys-D-Ala-D-Ala)-di-trans,octa-cis-undecaprenyl diphosphate = [GlcNAc-(1-&gt;4)-Mur2Ac(oyl-L-Ala-gamma-D-Glu-L-Lys-D-Ala-D-Ala)](n+1)-di-trans,octa-cis-undecaprenyl diphosphate + di-trans,octa-cis-undecaprenyl diphosphate + H(+). Its pathway is cell wall biogenesis; peptidoglycan biosynthesis. Functionally, peptidoglycan polymerase that catalyzes glycan chain elongation from lipid-linked precursors. This chain is Biosynthetic peptidoglycan transglycosylase, found in Azoarcus sp. (strain BH72).